A 217-amino-acid polypeptide reads, in one-letter code: MKFFVDTADVKEIRELNDLGLVDGVTTNPSLILKSGRDIIEVTKEICNIVKGPVSAEVAATEYEQMMKEAAVIAKIADNICIKLPVTLDGLKACKALSSDGHKVNMTLCFSANQALLAAKAGATFISPFIGRLDDTGINGMELIAEIRTIYDNYDYRTEILAASVRTVNHVKEAALIGADVVTAPPATLKALVKHPLTDKGLETFLADWAKTGQKIA.

Lys-83 serves as the catalytic Schiff-base intermediate with substrate.

This sequence belongs to the transaldolase family. Type 3B subfamily.

The protein localises to the cytoplasm. The enzyme catalyses D-sedoheptulose 7-phosphate + D-glyceraldehyde 3-phosphate = D-erythrose 4-phosphate + beta-D-fructose 6-phosphate. Its pathway is carbohydrate degradation; pentose phosphate pathway; D-glyceraldehyde 3-phosphate and beta-D-fructose 6-phosphate from D-ribose 5-phosphate and D-xylulose 5-phosphate (non-oxidative stage): step 2/3. Its function is as follows. Transaldolase is important for the balance of metabolites in the pentose-phosphate pathway. This Brucella anthropi (strain ATCC 49188 / DSM 6882 / CCUG 24695 / JCM 21032 / LMG 3331 / NBRC 15819 / NCTC 12168 / Alc 37) (Ochrobactrum anthropi) protein is Probable transaldolase.